A 132-amino-acid polypeptide reads, in one-letter code: Group 2 truncated hemoglobin YjbI (132 aa).

Heme-binding residues include Thr-45, Lys-48, Tyr-63, and His-76.

The protein belongs to the truncated hemoglobin family. Group II subfamily. Monomer. Heme is required as a cofactor.

Functionally, hemoglobin-like protein that exhibits a low peroxidase activity. Its very high oxygen affinity may rule out the possibility that it is involved in oxygen transport. This Bacillus subtilis (strain 168) protein is Group 2 truncated hemoglobin YjbI (yjbI).